A 210-amino-acid chain; its full sequence is Large ribosomal subunit protein uL4 (210 aa).

A compositionally biased stretch (polar residues) spans 44–54 (QRQGTASTLTR). A disordered region spans residues 44–96 (QRQGTASTLTRSEVRGGGRKPYKQKGTGRARQGSIRTPLRPGGGVIFGPKPRS). Positions 60–71 (GGRKPYKQKGTG) are enriched in basic residues.

This sequence belongs to the universal ribosomal protein uL4 family. As to quaternary structure, part of the 50S ribosomal subunit.

One of the primary rRNA binding proteins, this protein initially binds near the 5'-end of the 23S rRNA. It is important during the early stages of 50S assembly. It makes multiple contacts with different domains of the 23S rRNA in the assembled 50S subunit and ribosome. In terms of biological role, forms part of the polypeptide exit tunnel. In Prochlorococcus marinus (strain MIT 9515), this protein is Large ribosomal subunit protein uL4.